Reading from the N-terminus, the 1138-residue chain is Pesticidal crystal protein Cry7Ab (1138 aa).

This sequence belongs to the delta endotoxin family.

In terms of biological role, promotes colloidosmotic lysis by binding to the midgut epithelial cells of Coleoptera. The protein is Pesticidal crystal protein Cry7Ab (cry7Ab) of Bacillus thuringiensis subsp. dakota.